A 253-amino-acid polypeptide reads, in one-letter code: uncharacterized protein (253 aa).

One can recognise a BON 1 domain in the interval 4 to 73; the sequence is FGKSTADRVK…IDVSGVTVLQ (70 aa). Over residues 79–93 the composition is skewed to low complexity; that stretch reads AAQTAPTTPAQTSPS. Residues 79–105 are disordered; sequence AAQTAPTTPAQTSPSVQDSPSTPVQMP. One can recognise a BON 2 domain in the interval 119–188; sequence DTSRIAKAVL…VDISGLRVAQ (70 aa). The LysM domain maps to 204–251; it reads TVYTVKPGDSLSKIAEHYYGDQMEYKKIAHYNNISNPDLIQPGQKLRI.

This is an uncharacterized protein from Deinococcus radiodurans (strain ATCC 13939 / DSM 20539 / JCM 16871 / CCUG 27074 / LMG 4051 / NBRC 15346 / NCIMB 9279 / VKM B-1422 / R1).